The sequence spans 133 residues: Interleukin-4 (133 aa).

A signal peptide spans methionine 1 to glycine 24. Residues asparagine 28, asparagine 45, asparagine 62, asparagine 84, asparagine 96, and asparagine 102 are each glycosylated (N-linked (GlcNAc...) asparagine). 2 disulfides stabilise this stretch: cysteine 48–cysteine 85 and cysteine 70–cysteine 113.

Belongs to the IL-4/IL-13 family.

It localises to the secreted. Functionally, participates in at least several B-cell activation processes as well as of other cell types. It is a costimulator of DNA-synthesis. It induces the expression of class II MHC molecules on resting B-cells. It enhances both secretion and cell surface expression of IgE and IgG1. It also regulates the expression of the low affinity Fc receptor for IgE (CD23) on both lymphocytes and monocytes. Positively regulates IL31RA expression in macrophages. Stimulates autophagy in dendritic cells by interfering with mTORC1 signaling and through the induction of RUFY4. This is Interleukin-4 (IL4) from Felis catus (Cat).